The primary structure comprises 166 residues: Large ribosomal subunit protein uL10 (166 aa).

It belongs to the universal ribosomal protein uL10 family. Part of the ribosomal stalk of the 50S ribosomal subunit. The N-terminus interacts with L11 and the large rRNA to form the base of the stalk. The C-terminus forms an elongated spine to which L12 dimers bind in a sequential fashion forming a multimeric L10(L12)X complex.

Its function is as follows. Forms part of the ribosomal stalk, playing a central role in the interaction of the ribosome with GTP-bound translation factors. The sequence is that of Large ribosomal subunit protein uL10 from Phytoplasma australiense.